Here is a 311-residue protein sequence, read N- to C-terminus: Aspartate carbamoyltransferase catalytic subunit (311 aa).

Residues Arg-58 and Thr-59 each coordinate carbamoyl phosphate. Position 86 (Lys-86) interacts with L-aspartate. Carbamoyl phosphate is bound by residues Arg-108, His-136, and Gln-139. Arg-169 and Arg-224 together coordinate L-aspartate. Residues Gly-265 and Pro-266 each coordinate carbamoyl phosphate.

This sequence belongs to the aspartate/ornithine carbamoyltransferase superfamily. ATCase family. As to quaternary structure, heterododecamer (2C3:3R2) of six catalytic PyrB chains organized as two trimers (C3), and six regulatory PyrI chains organized as three dimers (R2).

The catalysed reaction is carbamoyl phosphate + L-aspartate = N-carbamoyl-L-aspartate + phosphate + H(+). Its pathway is pyrimidine metabolism; UMP biosynthesis via de novo pathway; (S)-dihydroorotate from bicarbonate: step 2/3. In terms of biological role, catalyzes the condensation of carbamoyl phosphate and aspartate to form carbamoyl aspartate and inorganic phosphate, the committed step in the de novo pyrimidine nucleotide biosynthesis pathway. This Geotalea uraniireducens (strain Rf4) (Geobacter uraniireducens) protein is Aspartate carbamoyltransferase catalytic subunit.